Here is a 622-residue protein sequence, read N- to C-terminus: Membrane protein insertase YidC (622 aa).

A helical membrane pass occupies residues 6–26 (IVLLIIFSTSLLFLWDAWVKE). A disordered region spans residues 47 to 87 (TQSKNNDGLPIPGSELTASQTGSDLNGIPSSGDTADSVTPR). Positions 62-83 (LTASQTGSDLNGIPSSGDTADS) are enriched in polar residues. Helical transmembrane passes span 381-401 (WGIA…PLSA), 451-471 (FPIL…LAAV), and 525-545 (PVAF…YSLV). Positions 563 to 622 (TAPSQDAPESPASKDAPELPVSNQVINDSENTEAPASGPADSPKKPVNIPRRMHKRTRKK) are disordered. Polar residues predominate over residues 583-596 (VSNQVINDSENTEA). Residues 613 to 622 (RRMHKRTRKK) are compositionally biased toward basic residues.

The protein belongs to the OXA1/ALB3/YidC family. Type 1 subfamily. Interacts with the Sec translocase complex via SecD. Specifically interacts with transmembrane segments of nascent integral membrane proteins during membrane integration.

Its subcellular location is the cell inner membrane. In terms of biological role, required for the insertion and/or proper folding and/or complex formation of integral membrane proteins into the membrane. Involved in integration of membrane proteins that insert both dependently and independently of the Sec translocase complex, as well as at least some lipoproteins. Aids folding of multispanning membrane proteins. The sequence is that of Membrane protein insertase YidC from Nitrosomonas eutropha (strain DSM 101675 / C91 / Nm57).